Consider the following 160-residue polypeptide: uncharacterized protein (160 aa).

Positions 9–151 (LLINYKTLEK…GENPLIWLPE (143 aa)) constitute an N-acetyltransferase domain.

This is an uncharacterized protein from Oceanobacillus iheyensis (strain DSM 14371 / CIP 107618 / JCM 11309 / KCTC 3954 / HTE831).